A 62-amino-acid polypeptide reads, in one-letter code: Short neurotoxin 1 (62 aa).

Residues 1 to 16 are compositionally biased toward polar residues; that stretch reads LECHNQQSIQTPTTTG. The tract at residues 1–20 is disordered; it reads LECHNQQSIQTPTTTGCSGG. 4 cysteine pairs are disulfide-bonded: C3–C24, C17–C41, C43–C54, and C55–C60.

Belongs to the three-finger toxin family. Short-chain subfamily. Type I alpha-neurotoxin sub-subfamily. As to expression, expressed by the venom gland.

Its subcellular location is the secreted. Its function is as follows. Binds to muscle nicotinic acetylcholine receptor (nAChR) and inhibit acetylcholine from binding to the receptor, thereby impairing neuromuscular transmission. The sequence is that of Short neurotoxin 1 from Naja kaouthia (Monocled cobra).